The chain runs to 634 residues: DNA-directed RNA polymerase subunit gamma (634 aa).

Cys74, Cys76, Cys89, and Cys92 together coordinate Zn(2+). Mg(2+)-binding residues include Asp471, Asp473, and Asp475.

The protein belongs to the RNA polymerase beta' chain family. RpoC1 subfamily. In cyanobacteria the RNAP catalytic core is composed of 2 alpha, 1 beta, 1 beta', 1 gamma and 1 omega subunit. When a sigma factor is associated with the core the holoenzyme is formed, which can initiate transcription. Mg(2+) serves as cofactor. It depends on Zn(2+) as a cofactor.

It catalyses the reaction RNA(n) + a ribonucleoside 5'-triphosphate = RNA(n+1) + diphosphate. DNA-dependent RNA polymerase catalyzes the transcription of DNA into RNA using the four ribonucleoside triphosphates as substrates. The polypeptide is DNA-directed RNA polymerase subunit gamma (Prochlorococcus marinus (strain MIT 9303)).